The primary structure comprises 445 residues: Phosphoglucosamine mutase (445 aa).

Catalysis depends on Ser-102, which acts as the Phosphoserine intermediate. Mg(2+)-binding residues include Ser-102, Asp-241, Asp-243, and Asp-245. Residue Ser-102 is modified to Phosphoserine.

This sequence belongs to the phosphohexose mutase family. The cofactor is Mg(2+). In terms of processing, activated by phosphorylation.

It catalyses the reaction alpha-D-glucosamine 1-phosphate = D-glucosamine 6-phosphate. Functionally, catalyzes the conversion of glucosamine-6-phosphate to glucosamine-1-phosphate. This is Phosphoglucosamine mutase from Pectobacterium atrosepticum (strain SCRI 1043 / ATCC BAA-672) (Erwinia carotovora subsp. atroseptica).